The chain runs to 116 residues: Dynein light chain Tctex-type 3 (116 aa).

Tyr-4 carries the post-translational modification 3'-nitrotyrosine.

Belongs to the dynein light chain Tctex-type family. Homodimer. The cytoplasmic dynein 1 complex consists of two catalytic heavy chains (HCs) and a number of non-catalytic subunits presented by intermediate chains (ICs), light intermediate chains (LICs) and light chains (LCs); the composition seems to vary in respect to the IC, LIC and LC composition. The heavy chain homodimer serves as a scaffold for the probable homodimeric assembly of the respective non-catalytic subunits. The ICs and LICs bind directly to the HC dimer and the LCs assemble on the IC dimer. DYNLT1 and DYNLT3 compete for association with dynein IC (DYNC1I1 or DYNC1I2). Self-associates. Interacts with DYNC1I1 and DYNC1I2. Interacts with BUB3. Interacts with SATB1 in nucleus to form complex with matrix attachment regions (MARs) of DNA.

Its subcellular location is the nucleus. It is found in the cytoplasm. The protein resides in the cytoskeleton. The protein localises to the chromosome. It localises to the centromere. Its subcellular location is the kinetochore. Functionally, acts as one of several non-catalytic accessory components of the cytoplasmic dynein 1 complex that are thought to be involved in linking dynein to cargos and to adapter proteins that regulate dynein function. Cytoplasmic dynein 1 acts as a motor for the intracellular retrograde motility of vesicles and organelles along microtubules. Probably binds BUB3 as part of transport cargo. Required for the efficient progression through mitosis. The sequence is that of Dynein light chain Tctex-type 3 (DYNLT3) from Homo sapiens (Human).